The primary structure comprises 83 residues: Probable insulin-like peptide alpha-type 2 (83 aa).

The first 21 residues, 1–21 (MHTTTILICFFIFLVQVSTMD), serve as a signal peptide directing secretion. 3 cysteine pairs are disulfide-bonded: Cys32–Cys66, Cys44–Cys79, and Cys54–Cys80.

It belongs to the insulin family.

The protein localises to the secreted. The sequence is that of Probable insulin-like peptide alpha-type 2 (ins-22) from Caenorhabditis elegans.